The chain runs to 615 residues: ATP-dependent RNA helicase mrh4, mitochondrial (615 aa).

A mitochondrion-targeting transit peptide spans 1–37 (MLRPKAGKCLLCSFRAAQKPVSQKWPSRALSMRTRLP). The interval 21–108 (VSQKWPSRAL…HRDRDDKKDR (88 aa)) is disordered. A compositionally biased stretch (basic and acidic residues) spans 90–108 (QERRTSRLDHRDRDDKKDR). The Q motif signature appears at 138–171 (QSFEQFALLDSVKQAIFQQALPELKEHVPTPVQR). The region spanning 184–395 (RRPKSEMEQY…RKRFPDINRL (212 aa)) is the Helicase ATP-binding domain. An ATP-binding site is contributed by 197–204 (AETGSGKT). The DEAD box motif lies at 342-345 (DEAD). The region spanning 444-615 (PVKGLMDVKR…EGMFEGKALI (172 aa)) is the Helicase C-terminal domain.

The protein belongs to the DEAD box helicase family. MRH4 subfamily.

Its subcellular location is the mitochondrion. The catalysed reaction is ATP + H2O = ADP + phosphate + H(+). Its function is as follows. ATP-binding RNA helicase involved in mitochondrial RNA metabolism. Required for maintenance of mitochondrial DNA. This chain is ATP-dependent RNA helicase mrh4, mitochondrial (mrh4), found in Sclerotinia sclerotiorum (strain ATCC 18683 / 1980 / Ss-1) (White mold).